The sequence spans 213 residues: Cytochrome b6 (213 aa).

Residues I30–V50 traverse the membrane as a helical segment. C33 is a heme c binding site. H84 and H98 together coordinate heme b. The next 3 membrane-spanning stretches (helical) occupy residues C88–F108, L114–Y134, and L184–I204. Residues H185 and H200 each contribute to the heme b site.

Belongs to the cytochrome b family. PetB subfamily. In terms of assembly, the subunits of the cytochrome bc complex are a Rieske Fe-S protein (PetC), cytochrome b6 (PetB), subunit IV (PetD), and a diheme cytochrome c (PetX). Heme b is required as a cofactor. It depends on heme c as a cofactor.

It localises to the cell membrane. In terms of biological role, component of the cytochrome bc complex which donates electrons to the photosynthetic reaction center. This is Cytochrome b6 from Heliobacterium modesticaldum (strain ATCC 51547 / Ice1).